The primary structure comprises 235 residues: Germin-like protein 1-4 (235 aa).

The first 27 residues, 1-27, serve as a signal peptide directing secretion; sequence MAAKLPTVVLLASFAAVILSLAAPLLA. A disulfide bridge connects residues C37 and C55. N60 carries N-linked (GlcNAc...) asparagine glycosylation. Positions 69 to 226 constitute a Cupin type-1 domain; that stretch reads PGLGKPADVY…AFQVDGGVVE (158 aa). The Mn(2+) site is built by H120, H122, E127, and H171.

It belongs to the germin family. As to quaternary structure, oligomer (believed to be a pentamer but probably hexamer).

The protein resides in the secreted. It is found in the extracellular space. Its subcellular location is the apoplast. In terms of biological role, may play a role in plant defense. Probably has no oxalate oxidase activity even if the active site is conserved. This is Germin-like protein 1-4 from Oryza sativa subsp. japonica (Rice).